The primary structure comprises 260 residues: Snake venom serine protease 2B (260 aa).

A signal peptide spans methionine 1–alanine 18. Positions glutamine 19–leucine 24 are excised as a propeptide. A Peptidase S1 domain is found at valine 25–alanine 251. Disulfide bonds link cysteine 31-cysteine 165, cysteine 52-cysteine 68, cysteine 102-cysteine 258, cysteine 144-cysteine 212, cysteine 176-cysteine 191, and cysteine 202-cysteine 227. Histidine 67 functions as the Charge relay system in the catalytic mechanism. Residues asparagine 101 and asparagine 105 are each glycosylated (N-linked (GlcNAc...) asparagine). Aspartate 112 acts as the Charge relay system in catalysis. N-linked (GlcNAc...) asparagine glycosylation is found at asparagine 123 and asparagine 156. Serine 206 (charge relay system) is an active-site residue.

Belongs to the peptidase S1 family. Snake venom subfamily. In terms of assembly, monomer. Expressed by the venom gland.

Its subcellular location is the secreted. Snake venom serine protease that may act in the hemostasis system of the prey. The chain is Snake venom serine protease 2B (TLG2B) from Craspedocephalus gramineus (Bamboo pit viper).